Reading from the N-terminus, the 189-residue chain is Putative manganese efflux pump MntP (189 aa).

Transmembrane regions (helical) follow at residues 3 to 23 (PVSLIFLAFAMSTDAFAAAIG), 41 to 61 (IIFGVIEAITPLVGWLLGQAA), 65 to 85 (VADWDHWIAFVLLVLLGLHMI), 106 to 128 (WILAVTALATSIDALAVGVGLAF), 141 to 161 (GLATMTMVTLGTMLGRALGAV), and 168 to 188 (MVGGVVLILVGATILYEHLSA).

It belongs to the MntP (TC 9.B.29) family.

It is found in the cell inner membrane. Functionally, probably functions as a manganese efflux pump. The chain is Putative manganese efflux pump MntP from Pseudomonas aeruginosa (strain UCBPP-PA14).